The chain runs to 562 residues: Cytochrome c oxidase subunit 1 (562 aa).

A helical membrane pass occupies residues threonine 21–phenylalanine 41. Residue histidine 72 participates in Fe(II)-heme a binding. A run of 8 helical transmembrane segments spans residues valine 74–alanine 94, leucine 105–leucine 125, alanine 144–leucine 164, valine 187–phenylalanine 207, leucine 227–isoleucine 247, leucine 267–aspartate 287, valine 300–leucine 320, and alanine 345–valine 365. Cu cation is bound by residues histidine 233, tyrosine 237, histidine 282, and histidine 283. Residues histidine 233–tyrosine 237 constitute a cross-link (1'-histidyl-3'-tyrosine (His-Tyr)). Residue histidine 384 participates in heme a3 binding. 4 consecutive transmembrane segments (helical) span residues phenylalanine 385–leucine 405, leucine 420–histidine 440, valine 471–valine 491, and isoleucine 527–valine 547. Histidine 386 lines the Fe(II)-heme a pocket.

It belongs to the heme-copper respiratory oxidase family. Heme is required as a cofactor. Cu cation serves as cofactor.

It localises to the cell membrane. The enzyme catalyses 4 Fe(II)-[cytochrome c] + O2 + 8 H(+)(in) = 4 Fe(III)-[cytochrome c] + 2 H2O + 4 H(+)(out). It participates in energy metabolism; oxidative phosphorylation. The chain is Cytochrome c oxidase subunit 1 (cbaA) from Thermus thermophilus (strain ATCC 27634 / DSM 579 / HB8).